Here is a 589-residue protein sequence, read N- to C-terminus: Lipoprotein LpqB (589 aa).

The first 20 residues, 1 to 20, serve as a signal peptide directing secretion; it reads MMRGVLVIMRLLCLGMLFTG. Cys-21 is lipidated: N-palmitoyl cysteine. Cys-21 is lipidated: S-diacylglycerol cysteine.

It belongs to the LpqB lipoprotein family.

It localises to the cell membrane. The sequence is that of Lipoprotein LpqB from Mycobacterium leprae (strain TN).